A 474-amino-acid chain; its full sequence is Phosphomannomutase (474 aa).

Ser-101 acts as the Phosphoserine intermediate in catalysis. Residues Ser-101, Asp-242, Asp-244, and Asp-246 each coordinate Mg(2+).

Belongs to the phosphohexose mutase family. Mg(2+) serves as cofactor.

The enzyme catalyses alpha-D-mannose 1-phosphate = D-mannose 6-phosphate. The chain is Phosphomannomutase (noeK) from Sinorhizobium fredii (strain NBRC 101917 / NGR234).